A 345-amino-acid polypeptide reads, in one-letter code: Phosphoribosylformylglycinamidine cyclo-ligase (345 aa).

It belongs to the AIR synthase family.

It is found in the cytoplasm. It catalyses the reaction 2-formamido-N(1)-(5-O-phospho-beta-D-ribosyl)acetamidine + ATP = 5-amino-1-(5-phospho-beta-D-ribosyl)imidazole + ADP + phosphate + H(+). It functions in the pathway purine metabolism; IMP biosynthesis via de novo pathway; 5-amino-1-(5-phospho-D-ribosyl)imidazole from N(2)-formyl-N(1)-(5-phospho-D-ribosyl)glycinamide: step 2/2. This chain is Phosphoribosylformylglycinamidine cyclo-ligase, found in Shewanella baltica (strain OS223).